The primary structure comprises 306 residues: Manganese transport system membrane protein MntB (306 aa).

The Periplasmic portion of the chain corresponds to 1–25 (MNQLVVAFPFWHWLVEPLQYEFLIR). A helical membrane pass occupies residues 26–46 (AIWVSAFVGLVCAVLSCYITL). Over 47–48 (KG) the chain is Cytoplasmic. A helical membrane pass occupies residues 49–69 (WSLMGDAISHAVVPGVVLAYA). The Periplasmic portion of the chain corresponds to 70-71 (LN). The helical transmembrane segment at 72-92 (IPFAIGAFTFGFGATVAIGYV) threads the bilayer. The Cytoplasmic portion of the chain corresponds to 93-101 (KSKTRLKED). The chain crosses the membrane as a helical span at residues 102 to 122 (AVIGIVFTGFFALGLVLVTKI). At 123 to 141 (PSNVDLFHILFGNVLGISQ) the chain is on the periplasmic side. Residues 142 to 162 (QDIIQTLIAGSITLIVILLRR) form a helical membrane-spanning segment. At 163–179 (KDLLLFCFDPNHAKAIG) the chain is on the cytoplasmic side. Residues 180 to 200 (LRTQVMYYTLLSVLALTIVAA) traverse the membrane as a helical segment. At 201–202 (LQ) the chain is on the periplasmic side. A helical transmembrane segment spans residues 203 to 223 (TAGIILVISMLVTPGSIGYLL). The Cytoplasmic segment spans residues 224 to 228 (SDRFD). The chain crosses the membrane as a helical span at residues 229–249 (HMLWYSVVSSVLSCVLGTYLS). Over 250–255 (YHFDVS) the chain is Periplasmic. The helical transmembrane segment at 256–276 (TGGMIVVILTTLFVIAMIGAP) threads the bilayer. Residues 277–306 (KYGILAQEWRKRSGPNPEDDENQTVVVDQV) lie on the Cytoplasmic side of the membrane.

Belongs to the ABC-3 integral membrane protein family.

Its subcellular location is the cell membrane. Functionally, part of an ATP-driven transport system for manganese. The protein is Manganese transport system membrane protein MntB (mntB) of Synechocystis sp. (strain ATCC 27184 / PCC 6803 / Kazusa).